The sequence spans 692 residues: Proprotein convertase subtilisin/kexin type 9 (692 aa).

A signal peptide spans 1 to 30 (MGTVSSRRSWWPLPLLLLLLLLLGPAGARA). Residues 31-152 (QEDEDGDYEE…IEEDSSVFAQ (122 aa)) constitute a propeptide that is removed on maturation. A Sulfotyrosine modification is found at Tyr38. Ser47 is subject to Phosphoserine. Residues 77–149 (TYVVVLKEET…VDYIEEDSSV (73 aa)) enclose the Inhibitor I9 domain. A Peptidase S8 domain is found at 155 to 461 (PWNLERITPP…GWQLFCRTVW (307 aa)). Catalysis depends on charge relay system residues Asp186 and His226. Intrachain disulfides connect Cys223/Cys255 and Cys323/Cys358. Ser386 (charge relay system) is an active-site residue. Residues 450-692 (GAGWQLFCRT…HLAQASQELQ (243 aa)) are C-terminal domain. Disulfide bonds link Cys457/Cys527, Cys477/Cys526, and Cys486/Cys509. The N-linked (GlcNAc...) asparagine glycan is linked to Asn533. 6 disulfides stabilise this stretch: Cys534–Cys601, Cys552–Cys600, Cys562–Cys588, Cys608–Cys679, Cys626–Cys678, and Cys635–Cys654. Ser688 carries the phosphoserine modification.

This sequence belongs to the peptidase S8 family. In terms of assembly, monomer. Can self-associate to form dimers and higher multimers which may have increased LDLR degrading activity. The precursor protein but not the mature protein may form multimers. Interacts with APOB, VLDLR, LRP8/APOER2 and BACE1. The full-length immature form (pro-PCSK9) interacts with SCNN1A, SCNN1B and SCNN1G. The pro-PCSK9 form (via C-terminal domain) interacts with LDLR. Interacts (via the C-terminal domain) with ANXA2 (via repeat Annexin 1); the interaction inhibits the degradation of LDLR. Ca(2+) is required as a cofactor. Cleavage by furin and PCSK5 generates a truncated inactive protein that is unable to induce LDLR degradation. In terms of processing, undergoes autocatalytic cleavage in the endoplasmic reticulum to release the propeptide from the N-terminus and the cleavage of the propeptide is strictly required for its maturation and activation. The cleaved propeptide however remains associated with the catalytic domain through non-covalent interactions, preventing potential substrates from accessing its active site. As a result, it is secreted from cells as a propeptide-containing, enzymatically inactive protein. Post-translationally, phosphorylation protects the propeptide against proteolysis.

It is found in the cytoplasm. It localises to the secreted. The protein localises to the endosome. Its subcellular location is the lysosome. The protein resides in the cell surface. It is found in the endoplasmic reticulum. It localises to the golgi apparatus. With respect to regulation, its proteolytic activity is autoinhibited by the non-covalent binding of the propeptide to the catalytic domain. Inhibited by EGTA. In terms of biological role, crucial player in the regulation of plasma cholesterol homeostasis. Binds to low-density lipid receptor family members: low density lipoprotein receptor (LDLR), very low density lipoprotein receptor (VLDLR), apolipoprotein E receptor (LRP1/APOER) and apolipoprotein receptor 2 (LRP8/APOER2), and promotes their degradation in intracellular acidic compartments. Acts via a non-proteolytic mechanism to enhance the degradation of the hepatic LDLR through a clathrin LDLRAP1/ARH-mediated pathway. May prevent the recycling of LDLR from endosomes to the cell surface or direct it to lysosomes for degradation. Can induce ubiquitination of LDLR leading to its subsequent degradation. Inhibits intracellular degradation of APOB via the autophagosome/lysosome pathway in a LDLR-independent manner. Involved in the disposal of non-acetylated intermediates of BACE1 in the early secretory pathway. Inhibits epithelial Na(+) channel (ENaC)-mediated Na(+) absorption by reducing ENaC surface expression primarily by increasing its proteasomal degradation. Regulates neuronal apoptosis via modulation of LRP8/APOER2 levels and related anti-apoptotic signaling pathways. In Pan paniscus (Pygmy chimpanzee), this protein is Proprotein convertase subtilisin/kexin type 9 (PCSK9).